Here is a 229-residue protein sequence, read N- to C-terminus: MSSLFQTYGRWDIDIKKAKGTYVEDQNGKTYLDFIQGIAVSNLGHCHEAVTEAVKKQLDSVWHVSNLFQNSLQEQAAQKLAAHSAGDLVFFCNSGAEANEGAIKLARKATGKTKIITFLQSFHGRTYAGMAATGQDKIKTGFGPMLGGFHYLPYNDPSAFKALGEEGDIAAVMLETVQGEGGVNPASAEFLSAVQSFCKEKQALLIIDEIQTGIGRTGTRFAYQHFGLS.

Residues Gly-95 to Ala-96 and Phe-122 contribute to the pyridoxal 5'-phosphate site. Arg-125 provides a ligand contact to N(2)-acetyl-L-ornithine. Residue Asp-208–Gln-211 participates in pyridoxal 5'-phosphate binding.

The protein belongs to the class-III pyridoxal-phosphate-dependent aminotransferase family. ArgD subfamily. Homodimer. Pyridoxal 5'-phosphate is required as a cofactor.

The protein localises to the cytoplasm. It catalyses the reaction N(2)-acetyl-L-ornithine + 2-oxoglutarate = N-acetyl-L-glutamate 5-semialdehyde + L-glutamate. The protein operates within amino-acid biosynthesis; L-arginine biosynthesis; N(2)-acetyl-L-ornithine from L-glutamate: step 4/4. The chain is Acetylornithine aminotransferase (argD) from Bacillus amyloliquefaciens (Bacillus velezensis).